We begin with the raw amino-acid sequence, 230 residues long: Ubiquitin carboxyl-terminal hydrolase isozyme L3 (230 aa).

In terms of domain architecture, UCH catalytic spans arginine 5 to alanine 229. The tract at residues proline 8–proline 13 is interaction with ubiquitin. The Nucleophile role is filled by cysteine 95. Serine 130 is subject to Phosphoserine. An interaction with ubiquitin. Crossover loop which restricts access of large ubiquitin adducts to the active site region spans residues alanine 152–alanine 159. Histidine 169 serves as the catalytic Proton donor. Residues glutamate 219–alanine 224 are interaction with ubiquitin.

It belongs to the peptidase C12 family. As to quaternary structure, preferentially binds diubiquitin; the interaction does not hydrolyze diubiquitin but, in vitro, inhibits the hydrolyzing activity on other substrates.

The protein localises to the cytoplasm. It catalyses the reaction Thiol-dependent hydrolysis of ester, thioester, amide, peptide and isopeptide bonds formed by the C-terminal Gly of ubiquitin (a 76-residue protein attached to proteins as an intracellular targeting signal).. Its activity is regulated as follows. Inhibited by monoubiquitin and diubiquitin. Functionally, deubiquitinating enzyme (DUB) that controls levels of cellular ubiquitin through processing of ubiquitin precursors and ubiquitinated proteins. Thiol protease that recognizes and hydrolyzes a peptide bond at the C-terminal glycine of either ubiquitin or NEDD8. Has a 10-fold preference for Arg and Lys at position P3, and exhibits a preference towards 'Lys-48'-linked ubiquitin chains. Deubiquitinates ENAC in apical compartments, thereby regulating apical membrane recycling. Indirectly increases the phosphorylation of IGFIR, AKT and FOXO1 and promotes insulin-signaling and insulin-induced adipogenesis. Required for stress-response retinal, skeletal muscle and germ cell maintenance. May be involved in working memory. Can hydrolyze UBB(+1), a mutated form of ubiquitin which is not effectively degraded by the proteasome. This chain is Ubiquitin carboxyl-terminal hydrolase isozyme L3 (UCHL3), found in Sus scrofa (Pig).